We begin with the raw amino-acid sequence, 384 residues long: Deoxyguanosinetriphosphate triphosphohydrolase-like protein (384 aa).

Residues 62-198 (RLTHSLEVST…AALADDISYI (137 aa)) enclose the HD domain.

The protein belongs to the dGTPase family. Type 2 subfamily.

This Rickettsia conorii (strain ATCC VR-613 / Malish 7) protein is Deoxyguanosinetriphosphate triphosphohydrolase-like protein.